A 152-amino-acid chain; its full sequence is Ribosome maturation factor RimP (152 aa).

It belongs to the RimP family.

The protein resides in the cytoplasm. Its function is as follows. Required for maturation of 30S ribosomal subunits. This is Ribosome maturation factor RimP from Ectopseudomonas mendocina (strain ymp) (Pseudomonas mendocina).